A 26-amino-acid chain; its full sequence is Probable early E4 17 kDa protein (26 aa).

This chain is Probable early E4 17 kDa protein, found in Homo sapiens (Human).